Consider the following 268-residue polypeptide: Large ribosomal subunit protein bL9m (268 aa).

Residues 1 to 52 constitute a mitochondrion transit peptide; it reads MAAAAFAVPRGVQLRVLTERLLRGGVRELLRPRLSGSTPGSERDFSLSHSRG.

It belongs to the bacterial ribosomal protein bL9 family. As to quaternary structure, component of the mitochondrial ribosome large subunit (39S) which comprises a 16S rRNA and about 50 distinct proteins.

It localises to the mitochondrion. This is Large ribosomal subunit protein bL9m (MRPL9) from Bos taurus (Bovine).